A 226-amino-acid polypeptide reads, in one-letter code: MNPIVINRLQRKLGYTFNHQELLQQALTHRSASSKHNERLEFLGDSILSFVIANALYHRFPRVDEGDMSRMRATLVRGNTLAELAREFDLGECLRLGPGELKSGGFRRESILADTVEALIGGVFLDSNIQTVEQLILNWYKTRLDEISPGDKQKDPKTRLQEYLQGRHLPLPSYLVVQVRGEAHDQEFTIHCQVSGLSEPVVGTGSSRRKAEQAAAEQALKKLELE.

The RNase III domain occupies 6–128 (INRLQRKLGY…LIGGVFLDSN (123 aa)). Glutamate 41 lines the Mg(2+) pocket. The active site involves aspartate 45. The Mg(2+) site is built by aspartate 114 and glutamate 117. The active site involves glutamate 117. The DRBM domain maps to 155–225 (DPKTRLQEYL…AEQALKKLEL (71 aa)).

This sequence belongs to the ribonuclease III family. In terms of assembly, homodimer. Mg(2+) is required as a cofactor.

Its subcellular location is the cytoplasm. The catalysed reaction is Endonucleolytic cleavage to 5'-phosphomonoester.. Its function is as follows. Digests double-stranded RNA. Involved in the processing of primary rRNA transcript to yield the immediate precursors to the large and small rRNAs (23S and 16S). Processes some mRNAs, and tRNAs when they are encoded in the rRNA operon. Processes pre-crRNA and tracrRNA of type II CRISPR loci if present in the organism. In Salmonella enteritidis PT4 (strain P125109), this protein is Ribonuclease 3.